Consider the following 406-residue polypeptide: Arginine deiminase (406 aa).

Cys396 serves as the catalytic Amidino-cysteine intermediate.

It belongs to the arginine deiminase family.

It localises to the cytoplasm. The enzyme catalyses L-arginine + H2O = L-citrulline + NH4(+). It participates in amino-acid degradation; L-arginine degradation via ADI pathway; carbamoyl phosphate from L-arginine: step 1/2. This Vibrio campbellii (strain ATCC BAA-1116) protein is Arginine deiminase.